The chain runs to 896 residues: Translation initiation factor IF-2 (896 aa).

The segment at 49-310 is disordered; the sequence is LKKEHGDTSG…MQQGFDKSAT (262 aa). Residues 57 to 66 are compositionally biased toward polar residues; the sequence is SGETEPTRLT. 3 stretches are compositionally biased toward basic and acidic residues: residues 101-174, 184-240, and 250-263; these read STIE…KDMN, AKKE…KSAD, and REAE…DEKA. Residues 284 to 295 show a composition bias toward basic residues; it reads RNQRGRGGKGKL. Residues 395–564 enclose the tr-type G domain; it reads GRAPVVTIMG…LLQSEVLELT (170 aa). The interval 404–411 is G1; the sequence is GHVDHGKT. 404–411 contributes to the GTP binding site; sequence GHVDHGKT. The G2 stretch occupies residues 429 to 433; it reads GITQH. The tract at residues 450–453 is G3; the sequence is DTPG. Residues 450-454 and 504-507 each bind GTP; these read DTPGH and NKID. Residues 504-507 form a G4 region; sequence NKID. The tract at residues 540-542 is G5; sequence SAK.

The protein belongs to the TRAFAC class translation factor GTPase superfamily. Classic translation factor GTPase family. IF-2 subfamily.

The protein localises to the cytoplasm. In terms of biological role, one of the essential components for the initiation of protein synthesis. Protects formylmethionyl-tRNA from spontaneous hydrolysis and promotes its binding to the 30S ribosomal subunits. Also involved in the hydrolysis of GTP during the formation of the 70S ribosomal complex. The polypeptide is Translation initiation factor IF-2 (Vibrio atlanticus (strain LGP32) (Vibrio splendidus (strain Mel32))).